The primary structure comprises 486 residues: MTTVYTLVSWLAILGYWLLIAGVTLRILMKRRAVPSAMAWLLIIYILPLVGIIAYLAVGELHLGKRRAERARAMWPSTAKWLNDLKACKHIFAEENSSVAAPLFKLCERRQGIAGVKGNQLQLMTESDDVMQALIRDIQLARHNIEMVFYIWKPGGMADQVAESLMAAARRGIHCRLMLDSAGSVAFFRSPWPELMRNAGIEVVEALKVNLMRVFLRRMDLRQHRKMIMIDNYIAYTGSMNMVDPRYFKQDAGVGQWIDLMARMEGPIATAMGIIYSCDWEIETGKRILPPPPDVNIMPFEQASGHTIHTIASGPGFPEDLIHQALLTAAYSAREYLIMTTPYFVPSDDLFHAICTAAQRGVDVSIILPRKNDSMLVGWASRAFFTELLAAGVKIYQFEGGLLHTKSVLVDGELSLVGTVNLDMRSLWLNFEITLAIDDKGFGADLAAVQDDYISRSRLLDARLWLKRPLWQRVAERLFYFFSPLL.

2 helical membrane-spanning segments follow: residues 3–23 (TVYT…IAGV) and 38–58 (MAWL…YLAV). PLD phosphodiesterase domains are found at residues 219–246 (MDLR…VDPR) and 399–426 (EGGL…DMRS). Residues H224, K226, D231, H404, K406, and D411 contribute to the active site.

The protein belongs to the phospholipase D family. Cardiolipin synthase subfamily. ClsA sub-subfamily.

It is found in the cell inner membrane. The catalysed reaction is 2 a 1,2-diacyl-sn-glycero-3-phospho-(1'-sn-glycerol) = a cardiolipin + glycerol. Its function is as follows. Catalyzes the reversible phosphatidyl group transfer from one phosphatidylglycerol molecule to another to form cardiolipin (CL) (diphosphatidylglycerol) and glycerol. The polypeptide is Cardiolipin synthase A (Shigella dysenteriae serotype 1 (strain Sd197)).